A 440-amino-acid chain; its full sequence is DNA polymerase delta small subunit (440 aa).

This sequence belongs to the DNA polymerase delta/II small subunit family. In terms of assembly, heterodimer with subunits of 125 kDa and 50 kDa.

It is found in the nucleus. The catalysed reaction is DNA(n) + a 2'-deoxyribonucleoside 5'-triphosphate = DNA(n+1) + diphosphate. Its function is as follows. The function of the small subunit is not yet clear. The protein is DNA polymerase delta small subunit (POLD2) of Arabidopsis thaliana (Mouse-ear cress).